We begin with the raw amino-acid sequence, 465 residues long: MTRSSLARAPVLLHIGAGSFHRAHQAWYLHRVNAAVPPGERWTLTVGNIRDDMHATLAALAAQQGAYTLETVTPQGERAYETIRSIARVLPWSADLAALINTGADPACRIVSFTVTEGGYYLDEHDRLDVTHPDLAADLRGARSTLYGALAALLAERRQRGAGPLTLQSCDNLRSNGARFRAGMRAFLALRGDAALLAWFDANVSCPSAMVDRITPRPTDDVRTRVHAATGVDDRCPVMGESFIQWVIEDNFIAGRPAWEIAGAEIVADVHPYEEAKIRILNATHSCIAWAGTLAGLTYIHEGMRDAAIYRFAYDYVTDDVIPCLTPSPLDLERYRDVVLERFGNPYVLDTNQRVAADGFSKIPGFIAPTLAECFARGADPVATAVLPALFLGFLEGWARGTLPYVYQDGVMDGAAARSIVEAPDSVAAFCSDRQLWGSLAGRDALVQAVRAGRARVEAWRAARR.

The protein belongs to the mannitol dehydrogenase family.

It catalyses the reaction D-arabinitol + NAD(+) = D-xylulose + NADH + H(+). It functions in the pathway carbohydrate metabolism; D-arabinitol metabolism. The sequence is that of D-arabinitol 4-dehydrogenase (dalD) from Ralstonia nicotianae (strain ATCC BAA-1114 / GMI1000) (Ralstonia solanacearum).